Reading from the N-terminus, the 247-residue chain is Carboxy-S-adenosyl-L-methionine synthase (247 aa).

S-adenosyl-L-methionine is bound by residues Tyr-39, 64–66 (GCS), 89–90 (DN), 117–118 (DI), Asn-132, and Arg-199.

This sequence belongs to the class I-like SAM-binding methyltransferase superfamily. Cx-SAM synthase family. In terms of assembly, homodimer.

The enzyme catalyses prephenate + S-adenosyl-L-methionine = carboxy-S-adenosyl-L-methionine + 3-phenylpyruvate + H2O. Its function is as follows. Catalyzes the conversion of S-adenosyl-L-methionine (SAM) to carboxy-S-adenosyl-L-methionine (Cx-SAM). This chain is Carboxy-S-adenosyl-L-methionine synthase, found in Escherichia coli (strain K12 / MC4100 / BW2952).